A 119-amino-acid chain; its full sequence is Large ribosomal subunit protein uL14 (119 aa).

The protein belongs to the universal ribosomal protein uL14 family. Part of the 50S ribosomal subunit. Forms a cluster with proteins L3 and L19. In the 70S ribosome, L14 and L19 interact and together make contacts with the 16S rRNA in bridges B5 and B8.

In terms of biological role, binds to 23S rRNA. Forms part of two intersubunit bridges in the 70S ribosome. In Ehrlichia ruminantium (strain Gardel), this protein is Large ribosomal subunit protein uL14.